The chain runs to 407 residues: MNQKPSLFARLADGSLVLQILVGIIAGVILATVSKSGAESVAFLGQLFVGALKAIAPILVFILVAASIANQKKNAKTNMRPIVILYLFGTFSAAVTAVLMSFAFPTTLALTLDAAQASPPEGIGEVIHTLLFQLVDNPVNAVITGNYIGILAWGVGLGLALHHATDSTKLVFADVSHGVSQMVRFIIRLAPIGIFGLVSSTFATTGFSAIAGYMHLLLVLLGAMAIMALIINPAIVFFKIRRNPYPLVFTCLRESGVTAFFTRSSAANIPVNMALCEKLKLHEDTYSVSIPLGATINMGGAAITITILTLAAANSMGIQVDILTAILLSVVAGVSACGASGVAGGSLLLIPLACSLFGISNDVAMQVVAVGFIIGVIQDSAETGLNSSTDVIFTAAACEAAERKENA.

The next 9 membrane-spanning stretches (helical) occupy residues 14-34 (GSLVLQILVGIIAGVILATVS), 48-68 (FVGALKAIAPILVFILVAASI), 82-102 (IVILYLFGTFSAAVTAVLMSF), 141-161 (AVITGNYIGILAWGVGLGLAL), 192-212 (IGIFGLVSSTFATTGFSAIAG), 218-238 (LVLLGAMAIMALIINPAIVFF), 290-310 (IPLGATINMGGAAITITILTL), 316-336 (MGIQVDILTAILLSVVAGVSA), and 363-383 (VAMQVVAVGFIIGVIQDSAET).

The protein belongs to the dicarboxylate/amino acid:cation symporter (DAACS) (TC 2.A.23) family.

The protein resides in the cell inner membrane. The enzyme catalyses L-serine(in) + Na(+)(in) = L-serine(out) + Na(+)(out). It carries out the reaction L-threonine(in) + Na(+)(in) = L-threonine(out) + Na(+)(out). Its function is as follows. Involved in the import of serine and threonine into the cell, with the concomitant import of sodium (symport system). This chain is Serine/threonine transporter SstT, found in Shewanella pealeana (strain ATCC 700345 / ANG-SQ1).